Reading from the N-terminus, the 76-residue chain is Exodeoxyribonuclease 7 small subunit (76 aa).

The protein belongs to the XseB family. Heterooligomer composed of large and small subunits.

The protein resides in the cytoplasm. It carries out the reaction Exonucleolytic cleavage in either 5'- to 3'- or 3'- to 5'-direction to yield nucleoside 5'-phosphates.. Functionally, bidirectionally degrades single-stranded DNA into large acid-insoluble oligonucleotides, which are then degraded further into small acid-soluble oligonucleotides. The protein is Exodeoxyribonuclease 7 small subunit of Staphylococcus haemolyticus (strain JCSC1435).